Here is a 605-residue protein sequence, read N- to C-terminus: Replication protein E1 (605 aa).

The short motif at 77–79 (KRK) is the Nuclear localization signal element. Serine 82 and serine 90 each carry phosphoserine; by host. Residues 89–98 (LSPRLESITL) carry the Nuclear export signal motif. The tract at residues 145–308 (QIGTVDIHYT…TIVGHQSTEA (164 aa)) is DNA-binding region. The SF3 helicase domain maps to 407 to 557 (VNFIMFLAAL…FPMKADNTPE (151 aa)). 433 to 440 (GPPNTGKS) is a binding site for ATP. A Glycyl lysine isopeptide (Lys-Gly) (interchain with G-Cter in SUMO) cross-link involves residue lysine 514. The disordered stretch occupies residues 580-605 (DQEDEGDNGESQRPFQCSARSANEHL). The segment covering 588–605 (GESQRPFQCSARSANEHL) has biased composition (polar residues).

The protein belongs to the papillomaviridae E1 protein family. Can form hexamers. Interacts with E2 protein; this interaction increases E1 DNA binding specificity. Interacts with host DNA polymerase subunit POLA2. Interacts with host single stranded DNA-binding protein RPA1. Interacts with host TOP1; this interaction stimulates the enzymatic activity of TOP1. Post-translationally, phosphorylated. Sumoylated.

Its subcellular location is the host nucleus. The enzyme catalyses Couples ATP hydrolysis with the unwinding of duplex DNA by translocating in the 3'-5' direction.. The catalysed reaction is ATP + H2O = ADP + phosphate + H(+). ATP-dependent DNA 3'-5' helicase required for initiation of viral DNA replication. It forms a complex with the viral E2 protein. The E1-E2 complex binds to the replication origin which contains binding sites for both proteins. During the initial step, a dimer of E1 interacts with a dimer of protein E2 leading to a complex that binds the viral origin of replication with high specificity. Then, a second dimer of E1 displaces the E2 dimer in an ATP-dependent manner to form the E1 tetramer. Following this, two E1 monomers are added to each half of the site, which results in the formation of two E1 trimers on the viral ori. Subsequently, two hexamers will be created. The double hexamer acts as a bi-directional helicase machinery and unwinds the viral DNA and then recruits the host DNA polymerase to start replication. The chain is Replication protein E1 from Homo sapiens (Human).